The chain runs to 205 residues: ATP synthase subunit b (205 aa).

Positions 1–27 are cleaved as a signal peptide; it reads MKLNKKHLVAILSVLSLSIIVVPLLTS. Residue C28 is the site of N-palmitoyl cysteine attachment. The S-diacylglycerol cysteine moiety is linked to residue C28. The helical transmembrane segment at 48 to 68 threads the bilayer; the sequence is VWVFIAQVIAMCVVFSLVLWL.

Belongs to the ATPase B chain family. As to quaternary structure, F-type ATPases have 2 components, F(1) - the catalytic core - and F(0) - the membrane proton channel. F(1) has five subunits: alpha(3), beta(3), gamma(1), delta(1), epsilon(1). F(0) has three main subunits: a(1), b(2) and c(10-14). The alpha and beta chains form an alternating ring which encloses part of the gamma chain. F(1) is attached to F(0) by a central stalk formed by the gamma and epsilon chains, while a peripheral stalk is formed by the delta and b chains.

The protein localises to the cell membrane. Functionally, f(1)F(0) ATP synthase produces ATP from ADP in the presence of a proton or sodium gradient. F-type ATPases consist of two structural domains, F(1) containing the extramembraneous catalytic core and F(0) containing the membrane proton channel, linked together by a central stalk and a peripheral stalk. During catalysis, ATP synthesis in the catalytic domain of F(1) is coupled via a rotary mechanism of the central stalk subunits to proton translocation. Component of the F(0) channel, it forms part of the peripheral stalk, linking F(1) to F(0). This chain is ATP synthase subunit b, found in Ureaplasma parvum serovar 3 (strain ATCC 27815 / 27 / NCTC 11736).